The primary structure comprises 748 residues: Subtilisin-like protease (748 aa).

Positions 1–24 (MMKMELRLLVSLIFILCSISMLAA) are cleaved as a signal peptide. The Inhibitor I9 domain maps to 37-115 (TYIVHVKKSE…ARPERTLELH (79 aa)). In terms of domain architecture, Peptidase S8 spans 122 to 600 (FLGLKQGQGL…AGHVNPVKAN (479 aa)). Catalysis depends on charge relay system residues Asp-147 and His-206. The PA domain maps to 365-454 (PLVYPGSFGY…VEVSYAAGLT (90 aa)). Asn-376, Asn-380, and Asn-405 each carry an N-linked (GlcNAc...) asparagine glycan. Residue Ser-533 is the Charge relay system of the active site. 2 N-linked (GlcNAc...) asparagine glycosylation sites follow: Asn-675 and Asn-722.

It belongs to the peptidase S8 family.

Its subcellular location is the secreted. It is found in the extracellular space. It localises to the apoplast. Functionally, required for arbuscular mycorrhiza (AM) development during AM symbiosis with AM fungi (e.g. Glomeromycota intraradices). In Medicago truncatula (Barrel medic), this protein is Subtilisin-like protease.